Reading from the N-terminus, the 249-residue chain is Hydroxyacylglutathione hydrolase (249 aa).

7 residues coordinate Zn(2+): H53, H55, D57, H58, H110, D127, and H165.

This sequence belongs to the metallo-beta-lactamase superfamily. Glyoxalase II family. In terms of assembly, monomer. The cofactor is Zn(2+).

It carries out the reaction an S-(2-hydroxyacyl)glutathione + H2O = a 2-hydroxy carboxylate + glutathione + H(+). The protein operates within secondary metabolite metabolism; methylglyoxal degradation; (R)-lactate from methylglyoxal: step 2/2. Its function is as follows. Thiolesterase that catalyzes the hydrolysis of S-D-lactoyl-glutathione to form glutathione and D-lactic acid. The chain is Hydroxyacylglutathione hydrolase from Buchnera aphidicola subsp. Baizongia pistaciae (strain Bp).